Consider the following 442-residue polypeptide: UDP-N-acetylmuramate--L-alanine ligase (442 aa).

G109–S115 serves as a coordination point for ATP.

Belongs to the MurCDEF family.

Its subcellular location is the cytoplasm. It carries out the reaction UDP-N-acetyl-alpha-D-muramate + L-alanine + ATP = UDP-N-acetyl-alpha-D-muramoyl-L-alanine + ADP + phosphate + H(+). The protein operates within cell wall biogenesis; peptidoglycan biosynthesis. Functionally, cell wall formation. In Streptococcus pyogenes serotype M49 (strain NZ131), this protein is UDP-N-acetylmuramate--L-alanine ligase.